Consider the following 72-residue polypeptide: Translation initiation factor IF-1 (72 aa).

Positions 1–72 (MAKEEVLEFP…TKGRITYRFK (72 aa)) constitute an S1-like domain.

This sequence belongs to the IF-1 family. Component of the 30S ribosomal translation pre-initiation complex which assembles on the 30S ribosome in the order IF-2 and IF-3, IF-1 and N-formylmethionyl-tRNA(fMet); mRNA recruitment can occur at any time during PIC assembly.

Its subcellular location is the cytoplasm. Functionally, one of the essential components for the initiation of protein synthesis. Stabilizes the binding of IF-2 and IF-3 on the 30S subunit to which N-formylmethionyl-tRNA(fMet) subsequently binds. Helps modulate mRNA selection, yielding the 30S pre-initiation complex (PIC). Upon addition of the 50S ribosomal subunit IF-1, IF-2 and IF-3 are released leaving the mature 70S translation initiation complex. The protein is Translation initiation factor IF-1 of Brucella abortus (strain 2308).